Here is a 275-residue protein sequence, read N- to C-terminus: Putative hydro-lyase SPO1111 (275 aa).

The protein belongs to the D-glutamate cyclase family.

The polypeptide is Putative hydro-lyase SPO1111 (Ruegeria pomeroyi (strain ATCC 700808 / DSM 15171 / DSS-3) (Silicibacter pomeroyi)).